A 1402-amino-acid polypeptide reads, in one-letter code: Baculoviral IAP repeat-containing protein 1g (1402 aa).

BIR repeat units follow at residues 60–127 (EAKR…CEFL), 159–227 (EEAR…CEFL), and 278–345 (EELR…CVFL). 4 residues coordinate Zn(2+): cysteine 315, cysteine 318, histidine 335, and cysteine 342. In terms of domain architecture, NACHT spans 464 to 759 (SVMCVEGEAG…EFLAAVRLTE (296 aa)). Lysine 476 serves as a coordination point for ATP.

Prevents motor-neuron apoptosis induced by a variety of signals. In Mus musculus (Mouse), this protein is Baculoviral IAP repeat-containing protein 1g (Naip7).